The primary structure comprises 196 residues: Fe/S biogenesis protein NfuA (196 aa).

Positions 154 and 157 each coordinate [4Fe-4S] cluster.

This sequence belongs to the NfuA family. As to quaternary structure, homodimer. The cofactor is [4Fe-4S] cluster.

Its function is as follows. Involved in iron-sulfur cluster biogenesis. Binds a 4Fe-4S cluster, can transfer this cluster to apoproteins, and thereby intervenes in the maturation of Fe/S proteins. Could also act as a scaffold/chaperone for damaged Fe/S proteins. The polypeptide is Fe/S biogenesis protein NfuA (Blochmanniella pennsylvanica (strain BPEN)).